Reading from the N-terminus, the 361-residue chain is Teichoic acids export ATP-binding protein TagH (361 aa).

One can recognise an ABC transporter domain in the interval 13 to 246 (TKEYDLYKSQ…YREFTKWFKG (234 aa)). 60 to 67 (GVNGSGKS) contributes to the ATP binding site. Residues 247–361 (QSKKEKKHFQ…HDTNATSGVK (115 aa)) are unknown.

The protein belongs to the ABC transporter superfamily. Teichoic acids exporter (TC 3.A.1.104.1) family. As to quaternary structure, the complex is composed of two ATP-binding proteins (TagH) and two transmembrane proteins (TagG).

The protein resides in the cell membrane. The enzyme catalyses ATP + H2O + teichoic acidSide 1 = ADP + phosphate + teichoic acidSide 2.. Part of the ABC transporter complex TagGH involved in teichoic acids export. Responsible for energy coupling to the transport system. This Levilactobacillus brevis (strain ATCC 367 / BCRC 12310 / CIP 105137 / JCM 1170 / LMG 11437 / NCIMB 947 / NCTC 947) (Lactobacillus brevis) protein is Teichoic acids export ATP-binding protein TagH.